We begin with the raw amino-acid sequence, 205 residues long: MISMMSLDSTQSTGAFLDGQLLIAMPNMVDNRFARSVIYLCAHSEEGAMGIVLNRAARKINFPQLLVQLEVIGADEAIRLPNSAETMQVLNGGPVETGRGFVLHSDDFFIDNSTLPIDGGVSLTATIDILRAIAKGSGPHQAILALGYAGWSAGQLEEEIQHNGWLNCPADPSLIFDDALGSKYERALRKVGIDPGYLSSEAGHA.

Belongs to the UPF0301 (AlgH) family.

The polypeptide is UPF0301 protein Bind_0718 (Beijerinckia indica subsp. indica (strain ATCC 9039 / DSM 1715 / NCIMB 8712)).